A 305-amino-acid chain; its full sequence is Tetraspanin-12 (305 aa).

At 1 to 12 the chain is on the cytoplasmic side; sequence MAREDSVKCLRC. S-palmitoyl cysteine attachment occurs at residues Cys-9 and Cys-12. Residues 13-33 form a helical membrane-spanning segment; that stretch reads LLYALNLLFWLMSISVLAVSA. Over 34–59 the chain is Extracellular; that stretch reads WMRDYLNNVLTLTAETRVEEAVILTY. A helical membrane pass occupies residues 60–80; it reads FPVVHPVMIAVCCFLIIVGML. A lipid anchor (S-palmitoyl cysteine) is attached at Cys-83. Residues 90–110 traverse the membrane as a helical segment; sequence LLLLAWYFGTLLVIFCVELAC. Topologically, residues 111 to 224 are extracellular; sequence GVWTYEQEVM…RGTKQLQVLR (114 aa). Residues 225–245 traverse the membrane as a helical segment; that stretch reads FLGISIGVTQILAMILTITLL. Residues 246 to 305 are Cytoplasmic-facing; it reads WALYYDRREPGTDQMLSLKNDASQHLSCHSVELLKPSLSRIFEHTSMANSFNTHFEMEEL.

It belongs to the tetraspanin (TM4SF) family. Component of a complex, at least composed of TSPAN12, FZD4 and norrin (NDP). Interacts (when palmitoylated) with ADAM10. Interacts with MMP14/MT1-MMP. In terms of processing, palmitoylated; required for interaction with ADAM10. The precise position of palmitoylated residues is unclear and occurs either on Cys-9, Cys-12 and/or Cys-83.

It localises to the cell membrane. Its function is as follows. Regulator of cell surface receptor signal transduction. Plays a central role in retinal vascularization by regulating norrin (NDP) signal transduction. Acts in concert with norrin (NDP) to promote FZD4 multimerization and subsequent activation of FZD4, leading to promote accumulation of beta-catenin (CTNNB1) and stimulate LEF/TCF-mediated transcriptional programs. Suprisingly, it only activates the norrin (NDP)-dependent activation of FZD4, while it does not activate the Wnt-dependent activation of FZD4, suggesting the existence of a Wnt-independent signaling that also promote accumulation the beta-catenin (CTNNB1). Acts as a regulator of membrane proteinases such as ADAM10 and MMP14/MT1-MMP. Activates ADAM10-dependent cleavage activity of amyloid precursor protein (APP). Activates MMP14/MT1-MMP-dependent cleavage activity. The protein is Tetraspanin-12 (Tspan12) of Rattus norvegicus (Rat).